Consider the following 340-residue polypeptide: Photosystem II assembly lipoprotein Ycf48 (340 aa).

Positions 1-26 (MTSVLGLLKPLKKAIAAIAVLVLCIG) are cleaved as a signal peptide. The N-palmitoyl cysteine moiety is linked to residue Cys27. The S-diacylglycerol cysteine moiety is linked to residue Cys27.

The protein belongs to the Ycf48 family. As to quaternary structure, part of early PSII assembly complexes which includes D1 (psbA) and PsbI; not found in mature PSII. Binds to the lumenal side of PSII complexes. Interacts with YidC.

It is found in the cellular thylakoid membrane. In terms of biological role, a factor required for optimal assembly of photosystem II (PSII), acting in the early stages of PSII assembly. Also plays a role in replacement of photodamaged D1 (psbA). Assists YidC in synthesis of chlorophyll-binding proteins. The chain is Photosystem II assembly lipoprotein Ycf48 from Picosynechococcus sp. (strain ATCC 27264 / PCC 7002 / PR-6) (Agmenellum quadruplicatum).